Reading from the N-terminus, the 173-residue chain is Transcriptional repressor NrdR (173 aa).

A zinc finger spans residues 3–34; sequence CPYCGSLDTQVKDSRPTEDNTAIRRRRVCPDC. The region spanning 49 to 139 is the ATP-cone domain; the sequence is LMVVKRSGRR…VYRNFREARD (91 aa).

Belongs to the NrdR family. The cofactor is Zn(2+).

Negatively regulates transcription of bacterial ribonucleotide reductase nrd genes and operons by binding to NrdR-boxes. The polypeptide is Transcriptional repressor NrdR (Azorhizobium caulinodans (strain ATCC 43989 / DSM 5975 / JCM 20966 / LMG 6465 / NBRC 14845 / NCIMB 13405 / ORS 571)).